Consider the following 483-residue polypeptide: MSSSTKCKKAYEAVVKMVTHRFNSKAVRNYHQPQGLNRSLATRNAARVRGMVPSRRGGVGLYKSSSSKLMNKLGRQKTWINEFEHFNSLHEIAYTPNIALSSEIQKYLKALETNYRSIYEKSSELLDKKLEEIDKKWIEKNGCIPDASKDDVEKNLRKQYLADVQDVKNEHIPVMNCEPGGSQFKYLCKTIELLSSNKTICFAIDVEAFEFDTDIVTEIGIAIYDPRENIYSLMPIIRSYHLIVAEALPLRNKKFVCDFKDCFLLGESLVLPLEQCVEFIQSLINFYMKCETDQDTTWERAFVGHAIAGDIKWLKKIGVHVPELDNELTKPEDSTESKGVRKHVKMLDTEKIYSMCYGKKGSSLGKLLRLFHLPHAFLHNAGNDAYYTLLLMLKLGDYNFRKQIGADDLETMGYRIREWFKREADEPKILPMSYVLSVMNANNSKPKVDDKGRKKPRDLVPQTEFSGSHWFQNARAAFKSTLV.

The protein localises to the nucleus. Its subcellular location is the mitochondrion. This is an uncharacterized protein from Saccharomyces cerevisiae (strain ATCC 204508 / S288c) (Baker's yeast).